A 128-amino-acid chain; its full sequence is Holo-[acyl-carrier-protein] synthase (128 aa).

Positions 8 and 58 each coordinate Mg(2+).

It belongs to the P-Pant transferase superfamily. AcpS family. The cofactor is Mg(2+).

It is found in the cytoplasm. The catalysed reaction is apo-[ACP] + CoA = holo-[ACP] + adenosine 3',5'-bisphosphate + H(+). Functionally, transfers the 4'-phosphopantetheine moiety from coenzyme A to a Ser of acyl-carrier-protein. This chain is Holo-[acyl-carrier-protein] synthase, found in Exiguobacterium sibiricum (strain DSM 17290 / CCUG 55495 / CIP 109462 / JCM 13490 / 255-15).